A 471-amino-acid chain; its full sequence is Arginine biosynthesis bifunctional protein ArgJ, mitochondrial (471 aa).

The substrate site is built by Thr201, Lys230, Thr241, Glu328, Asn466, and Thr471. The active-site Nucleophile is Thr241.

It belongs to the ArgJ family. As to quaternary structure, heterodimer of an alpha and a beta chain. The alpha and beta chains are autoproteolytically processed from a single precursor protein within the mitochondrion.

It is found in the mitochondrion matrix. It catalyses the reaction N(2)-acetyl-L-ornithine + L-glutamate = N-acetyl-L-glutamate + L-ornithine. The enzyme catalyses L-glutamate + acetyl-CoA = N-acetyl-L-glutamate + CoA + H(+). It participates in amino-acid biosynthesis; L-arginine biosynthesis; L-ornithine and N-acetyl-L-glutamate from L-glutamate and N(2)-acetyl-L-ornithine (cyclic): step 1/1. It functions in the pathway amino-acid biosynthesis; L-arginine biosynthesis; N(2)-acetyl-L-ornithine from L-glutamate: step 1/4. In terms of biological role, catalyzes two activities which are involved in the cyclic version of arginine biosynthesis: the synthesis of acetylglutamate from glutamate and acetyl-CoA, and of ornithine by transacetylation between acetylornithine and glutamate. In Ajellomyces capsulatus (strain NAm1 / WU24) (Darling's disease fungus), this protein is Arginine biosynthesis bifunctional protein ArgJ, mitochondrial.